Here is a 213-residue protein sequence, read N- to C-terminus: Elongation factor 1-beta (213 aa).

The span at 67 to 80 (AGKAPAASGSAAAA) shows a compositional bias: low complexity. Positions 67-88 (AGKAPAASGSAAAAAEEEDDED) are disordered.

Belongs to the EF-1-beta/EF-1-delta family. In terms of assembly, EF-1 is composed of 4 subunits: alpha, beta, delta, and gamma.

Its function is as follows. EF-1-beta and EF-1-delta stimulate the exchange of GDP bound to EF-1-alpha to GTP. The polypeptide is Elongation factor 1-beta (EFB1) (Candida albicans (strain WO-1) (Yeast)).